We begin with the raw amino-acid sequence, 136 residues long: Small ribosomal subunit protein uS19 (136 aa).

It belongs to the universal ribosomal protein uS19 family.

Protein S19 forms a complex with S13 that binds strongly to the 16S ribosomal RNA. The chain is Small ribosomal subunit protein uS19 from Methanosarcina mazei (strain ATCC BAA-159 / DSM 3647 / Goe1 / Go1 / JCM 11833 / OCM 88) (Methanosarcina frisia).